Here is a 135-residue protein sequence, read N- to C-terminus: ATP synthase epsilon chain (135 aa).

It belongs to the ATPase epsilon chain family. F-type ATPases have 2 components, CF(1) - the catalytic core - and CF(0) - the membrane proton channel. CF(1) has five subunits: alpha(3), beta(3), gamma(1), delta(1), epsilon(1). CF(0) has three main subunits: a, b and c.

It localises to the cell inner membrane. Functionally, produces ATP from ADP in the presence of a proton gradient across the membrane. This chain is ATP synthase epsilon chain, found in Rhizobium leguminosarum bv. trifolii (strain WSM2304).